We begin with the raw amino-acid sequence, 222 residues long: Pyridoxine/pyridoxamine 5'-phosphate oxidase (222 aa).

Residues 71–76, 86–87, K93, and Q115 contribute to the FMN site; these read RMVLLK and YT. K76 serves as a coordination point for substrate. Substrate-binding residues include Y133, R137, and S141. Residues 150–151 and W195 each bind FMN; that span reads QS. 201–203 is a substrate binding site; that stretch reads RLH. R205 contacts FMN.

Belongs to the pyridoxamine 5'-phosphate oxidase family. As to quaternary structure, homodimer. FMN is required as a cofactor.

It carries out the reaction pyridoxamine 5'-phosphate + O2 + H2O = pyridoxal 5'-phosphate + H2O2 + NH4(+). The catalysed reaction is pyridoxine 5'-phosphate + O2 = pyridoxal 5'-phosphate + H2O2. It participates in cofactor metabolism; pyridoxal 5'-phosphate salvage; pyridoxal 5'-phosphate from pyridoxamine 5'-phosphate: step 1/1. The protein operates within cofactor metabolism; pyridoxal 5'-phosphate salvage; pyridoxal 5'-phosphate from pyridoxine 5'-phosphate: step 1/1. Catalyzes the oxidation of either pyridoxine 5'-phosphate (PNP) or pyridoxamine 5'-phosphate (PMP) into pyridoxal 5'-phosphate (PLP). The polypeptide is Pyridoxine/pyridoxamine 5'-phosphate oxidase (Caulobacter vibrioides (strain ATCC 19089 / CIP 103742 / CB 15) (Caulobacter crescentus)).